We begin with the raw amino-acid sequence, 289 residues long: Formamidopyrimidine-DNA glycosylase (289 aa).

The active-site Schiff-base intermediate with DNA is the P2. The active-site Proton donor is the E3. K60 (proton donor; for beta-elimination activity) is an active-site residue. Positions 94, 126, and 167 each coordinate DNA. The FPG-type zinc finger occupies 252–287 (QVYGKPAGTPCPRCGTGLARIRIAGRSSVFCPRCQP). R277 functions as the Proton donor; for delta-elimination activity in the catalytic mechanism.

Belongs to the FPG family. As to quaternary structure, monomer. Requires Zn(2+) as cofactor.

It carries out the reaction Hydrolysis of DNA containing ring-opened 7-methylguanine residues, releasing 2,6-diamino-4-hydroxy-5-(N-methyl)formamidopyrimidine.. It catalyses the reaction 2'-deoxyribonucleotide-(2'-deoxyribose 5'-phosphate)-2'-deoxyribonucleotide-DNA = a 3'-end 2'-deoxyribonucleotide-(2,3-dehydro-2,3-deoxyribose 5'-phosphate)-DNA + a 5'-end 5'-phospho-2'-deoxyribonucleoside-DNA + H(+). Functionally, involved in base excision repair of DNA damaged by oxidation or by mutagenic agents. Acts as a DNA glycosylase that recognizes and removes damaged bases. Has a preference for oxidized purines, such as 7,8-dihydro-8-oxoguanine (8-oxoG). Has AP (apurinic/apyrimidinic) lyase activity and introduces nicks in the DNA strand. Cleaves the DNA backbone by beta-delta elimination to generate a single-strand break at the site of the removed base with both 3'- and 5'-phosphates. This Thermomicrobium roseum (strain ATCC 27502 / DSM 5159 / P-2) protein is Formamidopyrimidine-DNA glycosylase.